The chain runs to 606 residues: MSDIIAYKLNGEIVDTQSIAGRESSAEPIYFDNSKEALHVIRHSCAHLMAQAIKSLYPKAKFFVGPNVEDGFYYDFRVDDEGTKLGESDLAAIEDKMKELAEKKFDIVKTCSTKANMSEKFKNDDLKQEVLKRIPDGEVSSYAQGDFEDLCRGPHLPNTKFLKFFKLTRVAGAYLGGDESREMLTRIYGTAYADKESLKEHIRIIEEAKKRDHRKLGVEMKLFTFDEEVGGGLPIWLPNGGRLRSKLEQLLYKAHRDRGYEPVRGPELLKADVWRRSGHYANYKENMYFTTIDETEYGIKPMNCVGHIKVYQSDIRSYRDLPLKFFEYGVVHRHEKSGVLHGLFRVREFAQDDSHIFCMPSQIKENILEILKFAGTIMENFGFHYEMEISTKPAKAIGGDEIWDTATKALKEALDENGFKYGIDEGGGAFYGPKIDIKITDALKRKWQCGTIQVDFNLPERFDLGYIDANNERQRPVMLHRALLGSFERFIGILLEHTAGELPFFIAPTQVVIVPISDAHLDYAKEISRELRKINVDSEIASKNESLNKRIRTAEKQRVPMIVVLGDNEVANKSVALRDRQARTQSDMSLAEFVNLTKEKLSEVHF.

The interval 212 to 503 (DHRKLGVEMK…LLEHTAGELP (292 aa)) is catalytic. Zn(2+) contacts are provided by Cys304, His355, and His480.

It belongs to the class-II aminoacyl-tRNA synthetase family. Homodimer. It depends on Zn(2+) as a cofactor.

Its subcellular location is the cytoplasm. The enzyme catalyses tRNA(Thr) + L-threonine + ATP = L-threonyl-tRNA(Thr) + AMP + diphosphate + H(+). Its function is as follows. Catalyzes the attachment of threonine to tRNA(Thr) in a two-step reaction: L-threonine is first activated by ATP to form Thr-AMP and then transferred to the acceptor end of tRNA(Thr). Also edits incorrectly charged L-seryl-tRNA(Thr). The polypeptide is Threonine--tRNA ligase (Campylobacter concisus (strain 13826)).